The sequence spans 464 residues: tRNA modification GTPase MnmE (464 aa).

Residues R29, E91, and R131 each contribute to the (6S)-5-formyl-5,6,7,8-tetrahydrofolate site. Residues G226–G387 enclose the TrmE-type G domain. Residue N236 participates in K(+) binding. GTP-binding positions include N236 to S241, T255 to T261, and D280 to G283. Position 240 (S240) interacts with Mg(2+). T255, L257, and T260 together coordinate K(+). Mg(2+) is bound at residue T261. K464 contributes to the (6S)-5-formyl-5,6,7,8-tetrahydrofolate binding site.

The protein belongs to the TRAFAC class TrmE-Era-EngA-EngB-Septin-like GTPase superfamily. TrmE GTPase family. Homodimer. Heterotetramer of two MnmE and two MnmG subunits. It depends on K(+) as a cofactor.

It localises to the cytoplasm. In terms of biological role, exhibits a very high intrinsic GTPase hydrolysis rate. Involved in the addition of a carboxymethylaminomethyl (cmnm) group at the wobble position (U34) of certain tRNAs, forming tRNA-cmnm(5)s(2)U34. The chain is tRNA modification GTPase MnmE from Prochlorococcus marinus (strain NATL1A).